The sequence spans 211 residues: Pupal cuticle protein G1A (211 aa).

5 consecutive repeat copies span residues 13-16, 21-24, 33-36, 111-114, and 179-182.

Its function is as follows. Component of the cuticle of the pupa of Tenebrio molitor. This is Pupal cuticle protein G1A from Tenebrio molitor (Yellow mealworm beetle).